Reading from the N-terminus, the 403-residue chain is Ribose-phosphate pyrophosphokinase 1, chloroplastic (403 aa).

The transit peptide at 1-49 (MASLGLSFPPAAKTPTYLASSSSTFFSNSSLSVRTSQFRSRNSVFACVK) directs the protein to the chloroplast. Mg(2+) is bound by residues D217, H219, D228, and D232. The segment at 303 to 318 (GKVAIMVDDMIDTAGT) is binding of phosphoribosylpyrophosphate.

It belongs to the ribose-phosphate pyrophosphokinase family. Requires Mg(2+) as cofactor.

Its subcellular location is the plastid. It is found in the chloroplast. It catalyses the reaction D-ribose 5-phosphate + ATP = 5-phospho-alpha-D-ribose 1-diphosphate + AMP + H(+). The sequence is that of Ribose-phosphate pyrophosphokinase 1, chloroplastic (PRS1) from Arabidopsis thaliana (Mouse-ear cress).